We begin with the raw amino-acid sequence, 535 residues long: CTP synthase (535 aa).

The tract at residues 1–268 (MSTKYIFVTG…DQIVCDHLKL (268 aa)) is amidoligase domain. Ser14 is a CTP binding site. Ser14 contacts UTP. Residue 15 to 20 (SMGKGI) coordinates ATP. Residue Tyr55 participates in L-glutamine binding. Asp72 is a binding site for ATP. Asp72 and Glu142 together coordinate Mg(2+). CTP is bound by residues 149 to 151 (DME), 189 to 194 (KTKIAQ), and Lys225. Residues 189–194 (KTKIAQ) and Lys225 contribute to the UTP site. Residue Val243 participates in ATP binding. One can recognise a Glutamine amidotransferase type-1 domain in the interval 293–535 (KIALVGKYVE…FIRVAVENSK (243 aa)). Gly355 contacts L-glutamine. Cys382 functions as the Nucleophile; for glutamine hydrolysis in the catalytic mechanism. Residues 383–386 (LGMQ), Glu406, and Arg464 contribute to the L-glutamine site. Residues His509 and Glu511 contribute to the active site.

The protein belongs to the CTP synthase family. As to quaternary structure, homotetramer. In contrast to E.coli CTP synthase, remains a tetramer at dilute enzyme concentrations even in the absence of Mg(2+), ATP and UTP.

The enzyme catalyses UTP + L-glutamine + ATP + H2O = CTP + L-glutamate + ADP + phosphate + 2 H(+). The catalysed reaction is L-glutamine + H2O = L-glutamate + NH4(+). It carries out the reaction UTP + NH4(+) + ATP = CTP + ADP + phosphate + 2 H(+). It participates in pyrimidine metabolism; CTP biosynthesis via de novo pathway; CTP from UDP: step 2/2. With respect to regulation, allosterically activated by GTP, when glutamine is the substrate. GTP has no effect on the reaction when ammonia is the substrate. The allosteric effector GTP functions by stabilizing the protein conformation that binds the tetrahedral intermediate(s) formed during glutamine hydrolysis. Also activated by magnesium. Allosterically inhibited by CTP. In terms of biological role, catalyzes the ATP-dependent amination of UTP to CTP with either L-glutamine or ammonia as the source of nitrogen. Is essential for the synthesis of CTP de novo. Contrary to other bacterial CTP synthases, the lactococcal enzyme is also able to convert dUTP to dCTP, but this reaction may not play a significant physiological role. Regulates intracellular CTP levels through interactions with the four ribonucleotide triphosphates. This Lactococcus lactis subsp. cremoris (strain MG1363) protein is CTP synthase.